Consider the following 493-residue polypeptide: Dynein regulatory complex subunit 2 (493 aa).

2 coiled-coil regions span residues 99-163 (DSVI…RKLI) and 253-280 (KDEKSSKEIETQMKKIQKLQETIGILKG).

It belongs to the DRC2 family. In terms of assembly, component of the nexin-dynein regulatory complex (N-DRC). Interacts with DRC1.

The protein localises to the cytoplasm. It localises to the cytoskeleton. It is found in the flagellum basal body. The protein resides in the cell projection. Its subcellular location is the cilium. The protein localises to the flagellum. It localises to the flagellum axoneme. Its function is as follows. Component of the nexin-dynein regulatory complex (N-DRC), a key regulator of ciliary/flagellar motility which maintains the alignment and integrity of the distal axoneme and regulates microtubule sliding in motile axonemes. Plays a critical role in the assembly of N-DRC and also stabilizes the assembly of multiple inner dynein arms and radial spokes. Coassembles with DRC1 to form a central scaffold needed for assembly of the N-DRC and its attachment to the outer doublet microtubules. This chain is Dynein regulatory complex subunit 2 (Ccdc65), found in Mus musculus (Mouse).